A 402-amino-acid chain; its full sequence is Tryptophan synthase beta chain (402 aa).

Lysine 91 is modified (N6-(pyridoxal phosphate)lysine).

This sequence belongs to the TrpB family. Tetramer of two alpha and two beta chains. The cofactor is pyridoxal 5'-phosphate.

The enzyme catalyses (1S,2R)-1-C-(indol-3-yl)glycerol 3-phosphate + L-serine = D-glyceraldehyde 3-phosphate + L-tryptophan + H2O. Its pathway is amino-acid biosynthesis; L-tryptophan biosynthesis; L-tryptophan from chorismate: step 5/5. The beta subunit is responsible for the synthesis of L-tryptophan from indole and L-serine. The chain is Tryptophan synthase beta chain from Streptococcus thermophilus (strain ATCC BAA-250 / LMG 18311).